Consider the following 723-residue polypeptide: Catalase-peroxidase (723 aa).

The segment at residues 98–226 (WHSAGSYRVG…LAAVMMGLIY (129 aa)) is a cross-link (tryptophyl-tyrosyl-methioninium (Trp-Tyr) (with M-252)). The active-site Proton acceptor is His99. A cross-link (tryptophyl-tyrosyl-methioninium (Tyr-Met) (with W-98)) is located at residues 226–252 (YVNPEGVDGNPDPLKTAKDMRVTFARM). Residue His267 coordinates heme b.

It belongs to the peroxidase family. Peroxidase/catalase subfamily. Homodimer or homotetramer. Heme b is required as a cofactor. Formation of the three residue Trp-Tyr-Met cross-link is important for the catalase, but not the peroxidase activity of the enzyme.

The catalysed reaction is H2O2 + AH2 = A + 2 H2O. The enzyme catalyses 2 H2O2 = O2 + 2 H2O. Functionally, bifunctional enzyme with both catalase and broad-spectrum peroxidase activity. This is Catalase-peroxidase from Vibrio vulnificus (strain YJ016).